The sequence spans 229 residues: UPF0758 protein Cagg_0777 (229 aa).

Residues 105 to 227 (PIRSPGDVAA…YVSLRERGIG (123 aa)) enclose the MPN domain. Residues His176, His178, and Asp189 each contribute to the Zn(2+) site. A JAMM motif motif is present at residues 176-189 (HNHPSGEATPSPED).

It belongs to the UPF0758 family.

The polypeptide is UPF0758 protein Cagg_0777 (Chloroflexus aggregans (strain MD-66 / DSM 9485)).